Consider the following 228-residue polypeptide: ATP-dependent dethiobiotin synthetase BioD (228 aa).

Residue 13-18 (DIGKTF) coordinates ATP. Threonine 17 is a Mg(2+) binding site. Residue lysine 38 is part of the active site. Serine 42 lines the substrate pocket. Residues aspartate 55, 116–119 (EGSG), 179–180 (NK), and 208–210 (PKI) contribute to the ATP site. Residues aspartate 55 and glutamate 116 each contribute to the Mg(2+) site.

It belongs to the dethiobiotin synthetase family. As to quaternary structure, homodimer. Requires Mg(2+) as cofactor.

It localises to the cytoplasm. It carries out the reaction (7R,8S)-7,8-diammoniononanoate + CO2 + ATP = (4R,5S)-dethiobiotin + ADP + phosphate + 3 H(+). The protein operates within cofactor biosynthesis; biotin biosynthesis; biotin from 7,8-diaminononanoate: step 1/2. Catalyzes a mechanistically unusual reaction, the ATP-dependent insertion of CO2 between the N7 and N8 nitrogen atoms of 7,8-diaminopelargonic acid (DAPA, also called 7,8-diammoniononanoate) to form a ureido ring. This is ATP-dependent dethiobiotin synthetase BioD from Clostridium perfringens (strain ATCC 13124 / DSM 756 / JCM 1290 / NCIMB 6125 / NCTC 8237 / Type A).